The primary structure comprises 166 residues: Photosystem I assembly protein Ycf3 (166 aa).

TPR repeat units lie at residues alanine 31–proline 64, serine 68–leucine 101, and glycine 116–asparagine 149.

This sequence belongs to the Ycf3 family.

The protein resides in the cellular thylakoid membrane. In terms of biological role, essential for the assembly of the photosystem I (PSI) complex. May act as a chaperone-like factor to guide the assembly of the PSI subunits. The polypeptide is Photosystem I assembly protein Ycf3 (Acaryochloris marina (strain MBIC 11017)).